The primary structure comprises 144 residues: Bradykinin-potentiating and C-type natriuretic peptides isoform 2 (144 aa).

The N-terminal stretch at 1–23 (MVLSRLAASGLLLLALLALSVDG) is a signal peptide. A propeptide spanning residues 24 to 30 (KPVQQWA) is cleaved from the precursor. Position 31 is a pyrrolidone carboxylic acid (Q31). Positions 41-47 (LLVQQWA) are excised as a propeptide. At Q48 the chain carries Pyrrolidone carboxylic acid. Residues 61-67 (LTVQQWA) constitute a propeptide that is removed on maturation. Residue Q68 is modified to Pyrrolidone carboxylic acid. Residues 78–84 (LTVQQWA) constitute a propeptide that is removed on maturation. The interval 81 to 110 (QQWAQGRPPGPPIPPLTVQQWAQARPPHPP) is disordered. The residue at position 85 (Q85) is a Pyrrolidone carboxylic acid. Residues 96 to 102 (LTVQQWA) constitute a propeptide that is removed on maturation. Q103 is modified (pyrrolidone carboxylic acid). Positions 114–116 (APL) are excised as a propeptide. Q117 carries the post-translational modification Pyrrolidone carboxylic acid. A propeptide is located at residue V122. A Pyrrolidone carboxylic acid modification is found at Q123. A propeptide spanning residues 128 to 144 (VQKWAPVQKWAPLLQPT) is cleaved from the precursor.

In the N-terminal section; belongs to the bradykinin-potentiating peptide family. Expressed by venom gland.

It is found in the secreted. It localises to the cytoplasm. The protein localises to the cytosol. Its function is as follows. Peptide with several activities. It inhibits the activity of the angiotensin-converting enzyme (ACE) by a preferential interaction with its C-domain. It evokes transient hypotension (-14 mmHg) similar to that evoked by 0.5 ug of bradykinin, when injected alone into rats. It has a high bradykinin-potentiating effect (120%), when 60 nmol of BPP-10c are coinjected with 0.5 ug of bradykinin into rats. Does not affect angiotensin-1 pressor effects. Shows potent and long-lasting antihypertensive activity as well as a reduction of the heart rate. It also binds and dose-dependently promotes the activation of cytosolic argininosuccinate synthase (ASS1), an enzyme that catalyzes the conversion of citrulline, L-aspartate and ATP to argininosuccinate, AMP and pyrophosphate. It also enhances ASS1-dependent arginine production in HEK 293 cells, as well as in spontaneous hypertensive rat (SHR) and Wistar rat plasma. In addition, it induces the production of nitric-oxide (NO) by HUVEC cells via the endothelial nitric-oxide synthase (NOS3), which use arginine as a substrate and produce NO. It has been shown to be internalized by ASS1-expressing endothelial (HUVEC) and kidney (HEK 293) cells, and is detected homogenously distributed within the cell cytoplasm for up to 2 hours. Functionally, acts as indirect hypotensive agent. Increases leukocyte rolling flux and adhesion by five-fold in post-capillary venules, without any increments in vasodilation of arterioles. Acts as indirect hypotensive agent. Potently induces vasodilation of arterioles, with only a small increase in leukocyte rolling flux. This is Bradykinin-potentiating and C-type natriuretic peptides isoform 2 from Bothrops jararacussu (Jararacussu).